Here is a 155-residue protein sequence, read N- to C-terminus: Leader peptidase HopD (155 aa).

Belongs to the peptidase A24 family.

In Salmonella typhimurium (strain LT2 / SGSC1412 / ATCC 700720), this protein is Leader peptidase HopD (hopD).